A 401-amino-acid polypeptide reads, in one-letter code: NADH-ubiquinone oxidoreductase 49 kDa subunit (401 aa).

The protein belongs to the complex I 49 kDa subunit family.

The protein localises to the mitochondrion. It catalyses the reaction a ubiquinone + NADH + 5 H(+)(in) = a ubiquinol + NAD(+) + 4 H(+)(out). In terms of biological role, core subunit of the mitochondrial membrane respiratory chain NADH dehydrogenase (Complex I) that is believed to belong to the minimal assembly required for catalysis. Complex I functions in the transfer of electrons from NADH to the respiratory chain. The immediate electron acceptor for the enzyme is believed to be ubiquinone. Component of the iron-sulfur (IP) fragment of the enzyme. The polypeptide is NADH-ubiquinone oxidoreductase 49 kDa subunit (NAD7) (Acanthamoeba castellanii (Amoeba)).